Reading from the N-terminus, the 261-residue chain is Putative hydro-lyase SSP0308 (261 aa).

Belongs to the D-glutamate cyclase family.

This is Putative hydro-lyase SSP0308 from Staphylococcus saprophyticus subsp. saprophyticus (strain ATCC 15305 / DSM 20229 / NCIMB 8711 / NCTC 7292 / S-41).